A 643-amino-acid chain; its full sequence is Lysophospholipase ARB_05919 (643 aa).

The first 22 residues, 1-22, serve as a signal peptide directing secretion; it reads MMFIPATLGTFVLASLLPATVG. The PLA2c domain maps to 50-597; it reads DCPSTKPAVR…KMYCWDGTLN (548 aa). Residues N142, N176, N195, N293, N466, N472, N482, N503, N524, N533, N552, and N597 are each glycosylated (N-linked (GlcNAc...) asparagine).

Belongs to the lysophospholipase family.

The protein resides in the secreted. It carries out the reaction a 1-acyl-sn-glycero-3-phosphocholine + H2O = sn-glycerol 3-phosphocholine + a fatty acid + H(+). Its function is as follows. Catalyzes the release of fatty acids from lysophospholipids. Phospholipase B may well contribute to pathogenicity by abetting the fungus in damaging host cell membranes. This chain is Lysophospholipase ARB_05919, found in Arthroderma benhamiae (strain ATCC MYA-4681 / CBS 112371) (Trichophyton mentagrophytes).